We begin with the raw amino-acid sequence, 327 residues long: Cytochrome f (327 aa).

A signal peptide spans 1-24 (MKRIGLVFCALLLLLGMGARPAAA). Residues Y25, C45, C48, and H49 each coordinate heme. A helical transmembrane segment spans residues 293 to 313 (VKWLVAFLAAITITQVLLVLK).

It belongs to the cytochrome f family. As to quaternary structure, the 4 large subunits of the cytochrome b6-f complex are cytochrome b6, subunit IV (17 kDa polypeptide, PetD), cytochrome f and the Rieske protein, while the 4 small subunits are PetG, PetL, PetM and PetN. The complex functions as a dimer. Heme serves as cofactor.

It localises to the cellular thylakoid membrane. In terms of biological role, component of the cytochrome b6-f complex, which mediates electron transfer between photosystem II (PSII) and photosystem I (PSI), cyclic electron flow around PSI, and state transitions. In Synechococcus sp. (strain JA-2-3B'a(2-13)) (Cyanobacteria bacterium Yellowstone B-Prime), this protein is Cytochrome f.